The following is a 1070-amino-acid chain: Carbamoyl phosphate synthase large chain (1070 aa).

Residues 1–401 (MPKRDDIKTI…ALLKAVRSLE (401 aa)) form a carboxyphosphate synthetic domain region. Residues Arg129, Arg169, Gly175, Gly176, Lys208, Ile210, Glu215, Gly241, Ile242, His243, Gln284, and Glu298 each contribute to the ATP site. Residues 133-327 (RDLMNELGEP…IAKLAAKIAV (195 aa)) enclose the ATP-grasp 1 domain. Mg(2+) contacts are provided by Gln284, Glu298, and Asn300. Mn(2+)-binding residues include Gln284, Glu298, and Asn300. The oligomerization domain stretch occupies residues 402 to 546 (VGADHLLLEE…YSTYEEENES (145 aa)). Positions 547–929 (TRSAKESVIV…ALYKGFVASG (383 aa)) are carbamoyl phosphate synthetic domain. Residues 671–861 (EKALEILQIP…MANVATRVIL (191 aa)) form the ATP-grasp 2 domain. Arg707, Arg746, Val748, Glu752, Gly777, Val778, His779, Ser780, Gln820, and Glu832 together coordinate ATP. Mg(2+) is bound by residues Gln820, Glu832, and Asn834. Gln820, Glu832, and Asn834 together coordinate Mn(2+). In terms of domain architecture, MGS-like spans 930-1070 (TTMHDYGTVL…SEVKQPKVRV (141 aa)). Positions 930 to 1070 (TTMHDYGTVL…SEVKQPKVRV (141 aa)) are allosteric domain.

The protein belongs to the CarB family. As to quaternary structure, composed of two chains; the small (or glutamine) chain promotes the hydrolysis of glutamine to ammonia, which is used by the large (or ammonia) chain to synthesize carbamoyl phosphate. Tetramer of heterodimers (alpha,beta)4. Mg(2+) is required as a cofactor. The cofactor is Mn(2+).

It catalyses the reaction hydrogencarbonate + L-glutamine + 2 ATP + H2O = carbamoyl phosphate + L-glutamate + 2 ADP + phosphate + 2 H(+). It carries out the reaction hydrogencarbonate + NH4(+) + 2 ATP = carbamoyl phosphate + 2 ADP + phosphate + 2 H(+). It functions in the pathway amino-acid biosynthesis; L-arginine biosynthesis; carbamoyl phosphate from bicarbonate: step 1/1. The protein operates within pyrimidine metabolism; UMP biosynthesis via de novo pathway; (S)-dihydroorotate from bicarbonate: step 1/3. In terms of biological role, large subunit of the glutamine-dependent carbamoyl phosphate synthetase (CPSase). CPSase catalyzes the formation of carbamoyl phosphate from the ammonia moiety of glutamine, carbonate, and phosphate donated by ATP, constituting the first step of 2 biosynthetic pathways, one leading to arginine and/or urea and the other to pyrimidine nucleotides. The large subunit (synthetase) binds the substrates ammonia (free or transferred from glutamine from the small subunit), hydrogencarbonate and ATP and carries out an ATP-coupled ligase reaction, activating hydrogencarbonate by forming carboxy phosphate which reacts with ammonia to form carbamoyl phosphate. In Listeria welshimeri serovar 6b (strain ATCC 35897 / DSM 20650 / CCUG 15529 / CIP 8149 / NCTC 11857 / SLCC 5334 / V8), this protein is Carbamoyl phosphate synthase large chain.